Consider the following 309-residue polypeptide: Virulence regulon transcriptional activator VirB (309 aa).

Residues 152 to 171 constitute a DNA-binding region (H-T-H motif); sequence KDIAKKENLSRAKVTRAFQA.

This sequence belongs to the ParB family.

Its function is as follows. Transcription activator for the invasion antigens IpaB, IpaC and IpaD. VirB is itself regulated by VirF. The chain is Virulence regulon transcriptional activator VirB (virB) from Shigella flexneri.